Reading from the N-terminus, the 260-residue chain is Snake venom serine protease homolog 2 (260 aa).

The N-terminal stretch at 1 to 18 (MVLIRVLANLLVLQLSYA) is a signal peptide. A propeptide spanning residues 19–24 (QKSSEL) is cleaved from the precursor. One can recognise a Peptidase S1 domain in the interval 25-251 (VIGGDECNIN…YTDWIQSIIA (227 aa)). 6 cysteine pairs are disulfide-bonded: Cys31–Cys165, Cys52–Cys68, Cys100–Cys258, Cys144–Cys212, Cys176–Cys191, and Cys202–Cys227. The N-linked (GlcNAc...) asparagine glycan is linked to Asn123. A glycan (N-linked (GlcNAc...) asparagine) is linked at Asn253.

The protein belongs to the peptidase S1 family. Snake venom subfamily. Expressed by the venom gland.

The protein resides in the secreted. In terms of biological role, snake venom serine protease homolog that may act in the hemostasis system of the prey. The polypeptide is Snake venom serine protease homolog 2 (Macrovipera lebetinus (Levantine viper)).